Here is a 169-residue protein sequence, read N- to C-terminus: ATP synthase subunit b (169 aa).

The helical transmembrane segment at 26–46 (FFFVLLIFLIVLGVIAKWVVP) threads the bilayer.

This sequence belongs to the ATPase B chain family. In terms of assembly, F-type ATPases have 2 components, F(1) - the catalytic core - and F(0) - the membrane proton channel. F(1) has five subunits: alpha(3), beta(3), gamma(1), delta(1), epsilon(1). F(0) has three main subunits: a(1), b(2) and c(10-14). The alpha and beta chains form an alternating ring which encloses part of the gamma chain. F(1) is attached to F(0) by a central stalk formed by the gamma and epsilon chains, while a peripheral stalk is formed by the delta and b chains.

The protein resides in the cell membrane. In terms of biological role, f(1)F(0) ATP synthase produces ATP from ADP in the presence of a proton or sodium gradient. F-type ATPases consist of two structural domains, F(1) containing the extramembraneous catalytic core and F(0) containing the membrane proton channel, linked together by a central stalk and a peripheral stalk. During catalysis, ATP synthesis in the catalytic domain of F(1) is coupled via a rotary mechanism of the central stalk subunits to proton translocation. Its function is as follows. Component of the F(0) channel, it forms part of the peripheral stalk, linking F(1) to F(0). The sequence is that of ATP synthase subunit b from Mycobacterium sp. (strain JLS).